A 359-amino-acid polypeptide reads, in one-letter code: Aspartate carbamoyltransferase catalytic subunit (359 aa).

Carbamoyl phosphate is bound by residues Arg-52 and Thr-53. Lys-81 is a binding site for L-aspartate. Residues Arg-102, His-130, and Gln-133 each contribute to the carbamoyl phosphate site. 2 residues coordinate L-aspartate: Arg-163 and Arg-224. Residues Leu-264 and Pro-265 each contribute to the carbamoyl phosphate site.

This sequence belongs to the aspartate/ornithine carbamoyltransferase superfamily. ATCase family. In terms of assembly, heterododecamer (2C3:3R2) of six catalytic PyrB chains organized as two trimers (C3), and six regulatory PyrI chains organized as three dimers (R2).

It catalyses the reaction carbamoyl phosphate + L-aspartate = N-carbamoyl-L-aspartate + phosphate + H(+). It participates in pyrimidine metabolism; UMP biosynthesis via de novo pathway; (S)-dihydroorotate from bicarbonate: step 2/3. Functionally, catalyzes the condensation of carbamoyl phosphate and aspartate to form carbamoyl aspartate and inorganic phosphate, the committed step in the de novo pyrimidine nucleotide biosynthesis pathway. In Brachyspira hyodysenteriae (strain ATCC 49526 / WA1), this protein is Aspartate carbamoyltransferase catalytic subunit.